Reading from the N-terminus, the 94-residue chain is Pyrimidine/purine nucleoside phosphorylase 2 (94 aa).

It belongs to the nucleoside phosphorylase PpnP family.

It catalyses the reaction a purine D-ribonucleoside + phosphate = a purine nucleobase + alpha-D-ribose 1-phosphate. The catalysed reaction is adenosine + phosphate = alpha-D-ribose 1-phosphate + adenine. The enzyme catalyses cytidine + phosphate = cytosine + alpha-D-ribose 1-phosphate. It carries out the reaction guanosine + phosphate = alpha-D-ribose 1-phosphate + guanine. It catalyses the reaction inosine + phosphate = alpha-D-ribose 1-phosphate + hypoxanthine. The catalysed reaction is thymidine + phosphate = 2-deoxy-alpha-D-ribose 1-phosphate + thymine. The enzyme catalyses uridine + phosphate = alpha-D-ribose 1-phosphate + uracil. It carries out the reaction xanthosine + phosphate = alpha-D-ribose 1-phosphate + xanthine. In terms of biological role, catalyzes the phosphorolysis of diverse nucleosides, yielding D-ribose 1-phosphate and the respective free bases. Can use uridine, adenosine, guanosine, cytidine, thymidine, inosine and xanthosine as substrates. Also catalyzes the reverse reactions. The sequence is that of Pyrimidine/purine nucleoside phosphorylase 2 from Psychrobacter cryohalolentis (strain ATCC BAA-1226 / DSM 17306 / VKM B-2378 / K5).